The chain runs to 146 residues: Hemoglobin subunit beta (146 aa).

The Globin domain occupies 2–146 (HWTAEEKQLI…VAHALARKYH (145 aa)). Heme b is bound by residues His63 and His92.

It belongs to the globin family. In terms of assembly, heterotetramer of two alpha chains and two beta chains. As to expression, red blood cells.

Involved in oxygen transport from the lung to the various peripheral tissues. The chain is Hemoglobin subunit beta (HBB) from Ciconia ciconia (White stork).